The primary structure comprises 160 residues: MRLILLCVGRCKAGPETELSQRYIERANAAGRALGFPRVELREFDESRAREPALRKAAEAKTILASLSPGARLVALDESGALVSSREFSAFLGKTRDEGAPALTLAIGGADGLSGEILEAASPIVSFGRMTFPHQLVRIMAAEQLYRAMTILAGHPYHRD.

S-adenosyl-L-methionine is bound by residues Leu76, Gly108, and Phe127–Phe132.

This sequence belongs to the RNA methyltransferase RlmH family. In terms of assembly, homodimer.

The protein resides in the cytoplasm. The catalysed reaction is pseudouridine(1915) in 23S rRNA + S-adenosyl-L-methionine = N(3)-methylpseudouridine(1915) in 23S rRNA + S-adenosyl-L-homocysteine + H(+). Its function is as follows. Specifically methylates the pseudouridine at position 1915 (m3Psi1915) in 23S rRNA. This is Ribosomal RNA large subunit methyltransferase H from Methylocella silvestris (strain DSM 15510 / CIP 108128 / LMG 27833 / NCIMB 13906 / BL2).